The sequence spans 27 residues: Potassium channel toxin alpha-KTx 9.11 (27 aa).

3 disulfides stabilise this stretch: C3–C19, C6–C23, and C10–C25.

It belongs to the short scorpion toxin superfamily. Potassium channel inhibitor family. Alpha-KTx 09 subfamily. Expressed by the venom gland.

The protein localises to the secreted. Functionally, may play a role in blocking voltage-gated potassium channels Kv1.2/KCNA2, Kv1.3/KCNA3 and Kv1.6/KCNA6 to a lesser extent. This chain is Potassium channel toxin alpha-KTx 9.11, found in Mesobuthus gibbosus (Mediterranean checkered scorpion).